A 96-amino-acid polypeptide reads, in one-letter code: Protein CLAVATA 3 (96 aa).

Residues 1–21 (MDSKSFLLLLLLFCFLFLHDA) form the signal peptide. The interval 68–96 (ELRTVPSGPDPLHHHVNPPRQPRNNFQLP) is disordered. Hydroxyproline occurs at positions 73 and 76. O-linked (Ara...) hydroxyproline glycosylation occurs at Pro76.

This sequence belongs to the CLV3/ESR signal peptide family. Interacts with the extracellular leucine-rich repeat region of CLV1. Interacts with CLV2. CLV3-derived CLE peptides interacts with a tetrameric complex made of two CLV2/CRN heterodimers. In terms of processing, the MCLV3 peptide contains two hydroxyprolines, but hydroxylation had no direct effect on MCLV3 activity. The O-glycosylation (arabinosylation) of the hydroxyproline P-76 enhances binding affinity of the MCLV3 peptide for its receptor. First detected in heart stage embryos in a patch of cells between the developing cotyledons. In vegetative and inflorescence meristems, expressed in a small cone of cells at the meristem apex.

Its subcellular location is the secreted. It is found in the extracellular space. Extracellular signal that regulates meristem maintenance. Acts with CLV1 as a ligand-receptor pair in a signal transduction pathway coordinating growth between adjacent meristematic regions and controlling the balance between meristem cell proliferation and differentiation. In terms of biological role, the secreted peptide MCLV3 activates a signal transduction cascade to restrict WUSCHEL (WUS) expression, inducing shoot and root meristem consumption as cells differentiated into other organs. The sequence is that of Protein CLAVATA 3 from Arabidopsis thaliana (Mouse-ear cress).